The chain runs to 387 residues: TPR repeat-containing protein SYNPCC7002_A0425 (387 aa).

TPR repeat units follow at residues 63-96, 97-130, 132-164, 166-198, 200-232, 233-266, 267-300, 302-334, and 336-368; these read LNALLEQGNEQLTNRNFAQAVQHYRQALTLEANN, ARIHGALGYALSQLGNYSEAVTAYRRATELEDDN, EFFNALGFNLAQSGDNRSAINAYQRATQLQPNN, AYSLGLATVQFRAGDYDQALVAYRKVLAKDSNN, MALQNSLTSLLQLGRNQEAAVLFPDLLRQRPND, AELRIKAAVTWFGLNDRDQAIAFLEEARRLSTRD, SAMQIRVGKIYETQNLLPQAIAAYEQASFVDPQS, EAFALYGSAAMKTEDYINAIIAYRALTELSPTD, and AAFYNFAVALQGRRRSREALEALEMARDLYQQR.

The chain is TPR repeat-containing protein SYNPCC7002_A0425 from Picosynechococcus sp. (strain ATCC 27264 / PCC 7002 / PR-6) (Agmenellum quadruplicatum).